The following is a 564-amino-acid chain: NAD-dependent malic enzyme (564 aa).

Tyr-102 serves as the catalytic Proton donor. Residue Arg-155 participates in NAD(+) binding. The Proton acceptor role is filled by Lys-173. Residues Glu-244, Asp-245, and Asp-268 each coordinate a divalent metal cation. NAD(+) is bound by residues Asp-268 and Asn-417.

The protein belongs to the malic enzymes family. As to quaternary structure, homotetramer. The cofactor is Mg(2+). Mn(2+) serves as cofactor.

The enzyme catalyses (S)-malate + NAD(+) = pyruvate + CO2 + NADH. The catalysed reaction is oxaloacetate + H(+) = pyruvate + CO2. The protein is NAD-dependent malic enzyme of Pseudomonas aeruginosa (strain UCBPP-PA14).